Reading from the N-terminus, the 447-residue chain is Hydroxymethylglutaryl-CoA synthase (447 aa).

The active-site Proton donor/acceptor is E86. C118 functions as the Acyl-thioester intermediate in the catalytic mechanism. The (3S)-3-hydroxy-3-methylglutaryl-CoA site is built by C118, N156, T160, S210, H250, K259, N327, and S361. Residue H250 is the Proton donor/acceptor of the active site. T398 carries the post-translational modification Phosphothreonine.

It belongs to the thiolase-like superfamily. HMG-CoA synthase family.

It carries out the reaction acetoacetyl-CoA + acetyl-CoA + H2O = (3S)-3-hydroxy-3-methylglutaryl-CoA + CoA + H(+). The protein operates within metabolic intermediate biosynthesis; (R)-mevalonate biosynthesis; (R)-mevalonate from acetyl-CoA: step 2/3. Functionally, hydroxymethylglutaryl-CoA synthase; part of the first module of ergosterol biosynthesis pathway that includes the early steps of the pathway, conserved across all eukaryotes, and which results in the formation of mevalonate from acetyl-coenzyme A (acetyl-CoA). Hcs1 condenses acetyl-CoA with acetoacetyl-CoA to form hydroxymethylglutaryl-CoA (HMG-CoA). The first module starts with the action of the cytosolic acetyl-CoA acetyltransferase eg10 that catalyzes the formation of acetoacetyl-CoA. The hydroxymethylglutaryl-CoA synthases erg13 then condenses acetyl-CoA with acetoacetyl-CoA to form HMG-CoA. The rate-limiting step of the early module is the reduction to mevalonate by the 3-hydroxy-3-methylglutaryl-coenzyme A (HMG-CoA) reductases hcs1. The polypeptide is Hydroxymethylglutaryl-CoA synthase (Schizosaccharomyces pombe (strain 972 / ATCC 24843) (Fission yeast)).